The primary structure comprises 601 residues: Dual specificity tyrosine-phosphorylation-regulated kinase 2 (601 aa).

A disordered region spans residues Met1–Val24. Ser30 carries the phosphoserine modification. Position 106 is a phosphothreonine; by ATM (Thr106). Residues Lys189–Arg191 carry the Nuclear localization signal motif. The region spanning Tyr222–Leu535 is the Protein kinase domain. Residues Ile228–Val236, Lys251, and Phe301–Leu304 each bind ATP. Asp348 functions as the Proton acceptor in the catalytic mechanism. Thr381 is subject to Phosphothreonine; by MAP3K10. Tyr382 is subject to Phosphotyrosine; by autocatalysis. Residue Ser442 is modified to Phosphoserine; by ATM. A Phosphoserine; by MAP3K10 modification is found at Ser449.

This sequence belongs to the protein kinase superfamily. CMGC Ser/Thr protein kinase family. MNB/DYRK subfamily. As to quaternary structure, component of an E3 ligase complex containing DYRK2, EDD/UBR5, DDB1 and DCAF1 (EDVP complex). Interacts directly with EDD/UBR5, DDB1 and DCAF1. Interacts with SIAH2 and MDM2. Interacts with MAP3K10 and NFATC1. May also interact with CCNL2. The cofactor is Mg(2+). It depends on Mn(2+) as a cofactor. Post-translationally, autophosphorylates cotranslationally on the second tyrosine residue in the Tyr-X-Tyr motif in the activation loop, but once mature, does not have any protein tyrosine kinase activity. Phosphorylated at Thr-106 and Ser-442 by ATM in response to genotoxic stress. In terms of processing, under normal conditions, polyubiquitinated in the nucleus by MDM2, leading to its proteasomal degradation. Phosphorylation on Thr-106 and Ser-442 by ATM in response to genotoxic stress disrupts MDM2 binding and prevents MDM2-mediated ubiquitination and subsequent proteasomal degradation. Polyubiquitinated by SIAH2, leading to its proteasomal degradation. Polyubiquitinated by SIAH2 occurs under normal conditions, and is enhanced in response to hypoxia. In terms of tissue distribution, testis, after the onset of spermatogenesis.

The protein localises to the cytoplasm. The protein resides in the nucleus. It catalyses the reaction L-seryl-[protein] + ATP = O-phospho-L-seryl-[protein] + ADP + H(+). The enzyme catalyses L-threonyl-[protein] + ATP = O-phospho-L-threonyl-[protein] + ADP + H(+). It carries out the reaction L-tyrosyl-[protein] + ATP = O-phospho-L-tyrosyl-[protein] + ADP + H(+). Its activity is regulated as follows. Activated by autophosphorylation on the second tyrosine residue in the Tyr-X-Tyr motif in the activation loop. Inhibited by acridine analogs, purvalanol, and barely by harmine. Inhibited by leucettine and leucettine derivatives. Serine/threonine-protein kinase involved in the regulation of the mitotic cell cycle, cell proliferation, apoptosis, organization of the cytoskeleton and neurite outgrowth. Functions in part via its role in ubiquitin-dependent proteasomal protein degradation. Functions downstream of ATM and phosphorylates p53/TP53 at 'Ser-46', and thereby contributes to the induction of apoptosis in response to DNA damage. Phosphorylates NFATC1, and thereby inhibits its accumulation in the nucleus and its transcription factor activity. Phosphorylates EIF2B5 at 'Ser-544', enabling its subsequent phosphorylation and inhibition by GSK3B. Likewise, phosphorylation of NFATC1, CRMP2/DPYSL2 and CRMP4/DPYSL3 promotes their subsequent phosphorylation by GSK3B. May play a general role in the priming of GSK3 substrates. Inactivates GYS1 by phosphorylation at 'Ser-641', and potentially also a second phosphorylation site, thus regulating glycogen synthesis. Mediates EDVP E3 ligase complex formation and is required for the phosphorylation and subsequent degradation of KATNA1. Phosphorylates TERT at 'Ser-457', promoting TERT ubiquitination by the EDVP complex. Phosphorylates SIAH2, and thereby increases its ubiquitin ligase activity. Promotes the proteasomal degradation of MYC and JUN, and thereby regulates progress through the mitotic cell cycle and cell proliferation. Promotes proteasomal degradation of GLI2 and GLI3, and thereby plays a role in smoothened and sonic hedgehog signaling. Plays a role in cytoskeleton organization and neurite outgrowth via its phosphorylation of DCX and DPYSL2. Phosphorylates CRMP2/DPYSL2, CRMP4/DPYSL3, DCX, EIF2B5, EIF4EBP1, GLI2, GLI3, GYS1, JUN, MDM2, MYC, NFATC1, p53/TP53, TAU/MAPT and KATNA1. Can phosphorylate histone H1, histone H3 and histone H2B (in vitro). Can phosphorylate CARHSP1 (in vitro). This chain is Dual specificity tyrosine-phosphorylation-regulated kinase 2 (DYRK2), found in Homo sapiens (Human).